Consider the following 332-residue polypeptide: Phenol 2-monooxygenase, oxygenase component MhpL (332 aa).

This sequence belongs to the TmoE/XamoE family.

The enzyme catalyses phenol + NADH + O2 + H(+) = catechol + NAD(+) + H2O. Its pathway is aromatic compound metabolism; phenol degradation. Functionally, part of a multicomponent enzyme which catalyzes the degradation of phenol and some of its methylated derivatives. The protein is Phenol 2-monooxygenase, oxygenase component MhpL (mphL) of Acinetobacter pittii (strain PHEA-2).